A 1436-amino-acid polypeptide reads, in one-letter code: DNA-directed RNA polymerase subunit beta (1436 aa).

It belongs to the RNA polymerase beta chain family. The RNAP catalytic core consists of 2 alpha, 1 beta, 1 beta' and 1 omega subunit. When a sigma factor is associated with the core the holoenzyme is formed, which can initiate transcription.

The catalysed reaction is RNA(n) + a ribonucleoside 5'-triphosphate = RNA(n+1) + diphosphate. Functionally, DNA-dependent RNA polymerase catalyzes the transcription of DNA into RNA using the four ribonucleoside triphosphates as substrates. The chain is DNA-directed RNA polymerase subunit beta from Wolbachia pipientis.